The chain runs to 362 residues: 3-dehydroquinate synthase (362 aa).

NAD(+)-binding positions include aspartate 71–lysine 76, glycine 105–aspartate 109, threonine 129–threonine 130, lysine 142, lysine 151, and cysteine 169–threonine 172. Residues glutamate 184, histidine 247, and histidine 264 each contribute to the Zn(2+) site.

The protein belongs to the sugar phosphate cyclases superfamily. Dehydroquinate synthase family. Co(2+) is required as a cofactor. The cofactor is Zn(2+). It depends on NAD(+) as a cofactor.

The protein resides in the cytoplasm. It catalyses the reaction 7-phospho-2-dehydro-3-deoxy-D-arabino-heptonate = 3-dehydroquinate + phosphate. The protein operates within metabolic intermediate biosynthesis; chorismate biosynthesis; chorismate from D-erythrose 4-phosphate and phosphoenolpyruvate: step 2/7. In terms of biological role, catalyzes the conversion of 3-deoxy-D-arabino-heptulosonate 7-phosphate (DAHP) to dehydroquinate (DHQ). This Salmonella arizonae (strain ATCC BAA-731 / CDC346-86 / RSK2980) protein is 3-dehydroquinate synthase.